A 330-amino-acid chain; its full sequence is Electron transfer flavoprotein subunit alpha (330 aa).

Residue 270 to 298 (LYIACGISGAIQHLAGMSNSGTIVAINKN) coordinates FAD.

It belongs to the ETF alpha-subunit/FixB family. Heterodimer of an alpha and a beta subunit. FAD serves as cofactor.

Functionally, the electron transfer flavoprotein serves as a specific electron acceptor for other dehydrogenases. It transfers the electrons to the main respiratory chain via ETF-ubiquinone oxidoreductase (ETF dehydrogenase). This is Electron transfer flavoprotein subunit alpha (etfA) from Thermoanaerobacterium thermosaccharolyticum (strain ATCC 7956 / DSM 571 / NCIMB 9385 / NCA 3814 / NCTC 13789 / WDCM 00135 / 2032) (Clostridium thermosaccharolyticum).